The following is a 359-amino-acid chain: Peptide chain release factor 1 (359 aa).

The residue at position 234 (glutamine 234) is an N5-methylglutamine. A disordered region spans residues serine 283–arginine 305.

The protein belongs to the prokaryotic/mitochondrial release factor family. In terms of processing, methylated by PrmC. Methylation increases the termination efficiency of RF1.

It is found in the cytoplasm. Functionally, peptide chain release factor 1 directs the termination of translation in response to the peptide chain termination codons UAG and UAA. This chain is Peptide chain release factor 1, found in Methylobacterium sp. (strain 4-46).